We begin with the raw amino-acid sequence, 185 residues long: Elongation factor P (185 aa).

The protein belongs to the elongation factor P family.

It localises to the cytoplasm. The protein operates within protein biosynthesis; polypeptide chain elongation. Involved in peptide bond synthesis. Stimulates efficient translation and peptide-bond synthesis on native or reconstituted 70S ribosomes in vitro. Probably functions indirectly by altering the affinity of the ribosome for aminoacyl-tRNA, thus increasing their reactivity as acceptors for peptidyl transferase. This is Elongation factor P from Finegoldia magna (strain ATCC 29328 / DSM 20472 / WAL 2508) (Peptostreptococcus magnus).